The sequence spans 413 residues: S-adenosylmethionine synthase (413 aa).

H15 contacts ATP. D17 lines the Mg(2+) pocket. E43 provides a ligand contact to K(+). E56 and Q100 together coordinate L-methionine. The flexible loop stretch occupies residues 100–110 (QSPDISQGVNE). ATP is bound by residues 171-173 (DGK), 248-249 (KF), D257, 263-264 (RK), A280, and K284. D257 provides a ligand contact to L-methionine. An L-methionine-binding site is contributed by K288.

It belongs to the AdoMet synthase family. Homotetramer; dimer of dimers. Mg(2+) serves as cofactor. Requires K(+) as cofactor.

It localises to the cytoplasm. The catalysed reaction is L-methionine + ATP + H2O = S-adenosyl-L-methionine + phosphate + diphosphate. The protein operates within amino-acid biosynthesis; S-adenosyl-L-methionine biosynthesis; S-adenosyl-L-methionine from L-methionine: step 1/1. Catalyzes the formation of S-adenosylmethionine (AdoMet) from methionine and ATP. The overall synthetic reaction is composed of two sequential steps, AdoMet formation and the subsequent tripolyphosphate hydrolysis which occurs prior to release of AdoMet from the enzyme. The chain is S-adenosylmethionine synthase from Prochlorococcus marinus (strain AS9601).